We begin with the raw amino-acid sequence, 206 residues long: Isopentenyl-diphosphate Delta-isomerase (206 aa).

Mn(2+) contacts are provided by His44 and His51. In terms of domain architecture, Nudix hydrolase spans 49 to 183 (ALHLAFSCHV…PWAFSPWLVL (135 aa)). Cys86 is an active-site residue. Cys86 is a Mg(2+) binding site. His88 contacts Mn(2+). Glu106 serves as a coordination point for Mg(2+). Glu133 and Glu135 together coordinate Mn(2+). Glu135 is an active-site residue.

It belongs to the IPP isomerase type 1 family. Requires Mg(2+) as cofactor. Mn(2+) is required as a cofactor.

It localises to the cytoplasm. The catalysed reaction is isopentenyl diphosphate = dimethylallyl diphosphate. It functions in the pathway isoprenoid biosynthesis; dimethylallyl diphosphate biosynthesis; dimethylallyl diphosphate from isopentenyl diphosphate: step 1/1. Functionally, catalyzes the 1,3-allylic rearrangement of the homoallylic substrate isopentenyl (IPP) to its highly electrophilic allylic isomer, dimethylallyl diphosphate (DMAPP). This is Isopentenyl-diphosphate Delta-isomerase from Agromyces mediolanus (Corynebacterium mediolanum).